The following is a 757-amino-acid chain: Ecdysone receptor (757 aa).

Residues Met1–Leu300 are modulating. 2 disordered regions span residues Asn126–Gly192 and Leu235–Lys289. The segment covering Val128–Pro138 has biased composition (gly residues). The segment covering Asn167–His183 has biased composition (low complexity). 2 consecutive NR C4-type zinc fingers follow at residues Cys301–Cys321 and Cys337–Cys361. A DNA-binding region (nuclear receptor) is located at residues Cys301–Pro373. The NR LBD domain maps to Asn442 to Ala677. The span at Thr717 to Thr734 shows a compositional bias: low complexity. The segment at Thr717–Ala739 is disordered.

It belongs to the nuclear hormone receptor family. NR1 subfamily.

It localises to the nucleus. Its function is as follows. Receptor for ecdysone. Binds to ecdysone response elements (ECRES). This is Ecdysone receptor (EcR) from Lucilia cuprina (Green bottle fly).